The chain runs to 608 residues: Auxin response factor 3 (608 aa).

Residues 1 to 40 form a disordered region; the sequence is MGGLIDLNVMETEEDETQTQTPSSASGSVSPTSSSSASVS. Low complexity predominate over residues 18–40; the sequence is QTQTPSSASGSVSPTSSSSASVS. The TF-B3 DNA-binding region spans 159–261; sequence FCKTLTASDT…KLRLGVRRAS (103 aa).

The protein belongs to the ARF family. As to quaternary structure, homo and heterodimers. Expressed in the whole plant.

The protein resides in the nucleus. Auxin response factors (ARFs) are transcriptional factors that bind specifically to the DNA sequence 5'-TGTCTC-3' found in the auxin-responsive promoter elements (AuxREs). Could act as transcriptional activator or repressor. Formation of heterodimers with Aux/IAA proteins may alter their ability to modulate early auxin response genes expression. Involved in the establishment or elaboration of tissue patterning during gynoecial development. The polypeptide is Auxin response factor 3 (ARF3) (Arabidopsis thaliana (Mouse-ear cress)).